Here is a 224-residue protein sequence, read N- to C-terminus: uncharacterized protein (224 aa).

Pro residues predominate over residues 44–139; that stretch reads TSPPIVPLPT…PSPPPSPSPL (96 aa). The disordered stretch occupies residues 44 to 145; the sequence is TSPPIVPLPT…PSPLGEPMYY (102 aa).

This is an uncharacterized protein from Lepidoptera (butterflies and moths).